We begin with the raw amino-acid sequence, 354 residues long: Serum paraoxonase/lactonase 3 (354 aa).

A disulfide bridge links cysteine 42 with cysteine 352. Asparagine 50 carries N-linked (GlcNAc...) asparagine glycosylation. Residues glutamate 53 and aspartate 54 each contribute to the Ca(2+) site. Histidine 114 (proton acceptor) is an active-site residue. A Ca(2+)-binding site is contributed by isoleucine 116. Serine 165 bears the Phosphoserine mark. Ca(2+) contacts are provided by asparagine 167, aspartate 168, asparagine 223, aspartate 268, and asparagine 269. N-linked (GlcNAc...) asparagine glycosylation is found at asparagine 269 and asparagine 323.

This sequence belongs to the paraoxonase family. As to quaternary structure, homodimer. The cofactor is Ca(2+). In terms of processing, glycosylated. The signal sequence is not cleaved.

It is found in the secreted. The protein localises to the extracellular space. It carries out the reaction a phenyl acetate + H2O = a phenol + acetate + H(+). It catalyses the reaction An aryl dialkyl phosphate + H2O = dialkyl phosphate + an aryl alcohol.. The catalysed reaction is an N-acyl-L-homoserine lactone + H2O = an N-acyl-L-homoserine + H(+). Its function is as follows. Has low activity towards the organophosphate paraxon and aromatic carboxylic acid esters. Rapidly hydrolyzes lactones such as statin prodrugs (e.g. lovastatin). Hydrolyzes aromatic lactones and 5- or 6-member ring lactones with aliphatic substituents but not simple lactones or those with polar substituents. The sequence is that of Serum paraoxonase/lactonase 3 (Pon3) from Mus musculus (Mouse).